Here is a 93-residue protein sequence, read N- to C-terminus: YcgL domain-containing protein swp_2294 (93 aa).

Residues 1 to 85 form the YcgL domain; it reads MICAVYKSLR…PVVNLLEQHK (85 aa).

The polypeptide is YcgL domain-containing protein swp_2294 (Shewanella piezotolerans (strain WP3 / JCM 13877)).